Here is a 240-residue protein sequence, read N- to C-terminus: Transmembrane emp24 domain-containing protein 6 (240 aa).

A signal peptide spans 1–21; the sequence is MFPLLFVAGLVVLNLVSSARS. Residues 22–200 lie on the Lumenal side of the membrane; the sequence is QKTEPLSGTG…FFLLQSNYNY (179 aa). One can recognise a GOLD domain in the interval 53–138; sequence TECFWQFAHQ…SVQVYLNFGV (86 aa). N107 and N156 each carry an N-linked (GlcNAc...) asparagine glycan. Residues 201–223 form a helical membrane-spanning segment; that stretch reads VNWWSTAQSLVIVLSGILQLYFL. Topologically, residues 224–240 are cytoplasmic; that stretch reads KRLFNTPMTTETQKPRC.

It belongs to the EMP24/GP25L family.

The protein resides in the endoplasmic reticulum membrane. This chain is Transmembrane emp24 domain-containing protein 6 (TMED6), found in Bos taurus (Bovine).